The following is a 382-amino-acid chain: Farnesyl diphosphate synthase (382 aa).

Residues lysine 81, arginine 84, and glutamine 120 each coordinate isopentenyl diphosphate. Mg(2+)-binding residues include aspartate 127 and aspartate 131. Arginine 136 serves as a coordination point for dimethylallyl diphosphate. Isopentenyl diphosphate is bound at residue arginine 137. Dimethylallyl diphosphate contacts are provided by lysine 230, threonine 231, glutamine 270, lysine 287, and lysine 296.

Belongs to the FPP/GGPP synthase family. Requires Mg(2+) as cofactor.

Its subcellular location is the cytoplasm. It carries out the reaction isopentenyl diphosphate + dimethylallyl diphosphate = (2E)-geranyl diphosphate + diphosphate. The catalysed reaction is isopentenyl diphosphate + (2E)-geranyl diphosphate = (2E,6E)-farnesyl diphosphate + diphosphate. The protein operates within isoprenoid biosynthesis; farnesyl diphosphate biosynthesis; farnesyl diphosphate from geranyl diphosphate and isopentenyl diphosphate: step 1/1. It participates in isoprenoid biosynthesis; geranyl diphosphate biosynthesis; geranyl diphosphate from dimethylallyl diphosphate and isopentenyl diphosphate: step 1/1. Inhibited by aminobisphosphonate drugs (aBP), such as risedronate and alendronate. Functionally, key enzyme in isoprenoid biosynthesis which catalyzes the formation of farnesyl diphosphate (FPP), a sterol precursor. Involved in the inhibition of cell growth. The sequence is that of Farnesyl diphosphate synthase (fps) from Dictyostelium discoideum (Social amoeba).